Here is a 361-residue protein sequence, read N- to C-terminus: Peptide chain release factor 1 (361 aa).

Gln235 carries the N5-methylglutamine modification.

It belongs to the prokaryotic/mitochondrial release factor family. Post-translationally, methylated by PrmC. Methylation increases the termination efficiency of RF1.

Its subcellular location is the cytoplasm. Its function is as follows. Peptide chain release factor 1 directs the termination of translation in response to the peptide chain termination codons UAG and UAA. In Xanthomonas oryzae pv. oryzae (strain MAFF 311018), this protein is Peptide chain release factor 1.